Here is a 784-residue protein sequence, read N- to C-terminus: Toll-like receptor 2 (784 aa).

Residues Met1–Gly20 form the signal peptide. Topologically, residues Ala21–Arg587 are extracellular. The cysteines at positions 30 and 36 are disulfide-linked. 19 LRR repeats span residues Val54 to Asn77, Leu78 to Asn101, Leu102 to Val125, Leu126 to Asn150, Leu151 to Phe175, Leu176 to Asn199, Ile200 to Ser223, Leu224 to Ser250, Val251 to Gly278, Ile279 to Asn308, Val309 to Lys337, Val338 to Ser361, Leu362 to Phe388, Leu389 to Asn414, Leu415 to Lys437, Met438 to Gln457, Thr458 to Gln478, Leu479 to Val500, and Leu501 to Gln524. Asn114 carries N-linked (GlcNAc...) asparagine glycosylation. Asn199 is a glycosylation site (N-linked (GlcNAc...) asparagine). A disulfide bridge connects residues Cys353 and Cys382. Cys432 and Cys454 are oxidised to a cystine. N-linked (GlcNAc...) asparagine glycosylation is present at Asn442. The 55-residue stretch at Leu525–Arg579 folds into the LRRCT domain. A helical transmembrane segment spans residues Ala588–Leu608. The Cytoplasmic segment spans residues Cys609 to Ser784. Residues Ile639–Ile782 enclose the TIR domain. Residue Lys754 forms a Glycyl lysine isopeptide (Lys-Gly) (interchain with G-Cter in ubiquitin) linkage. The ATG16L1-binding motif motif lies at Tyr761–Leu778.

It belongs to the Toll-like receptor family. Interacts with LY96, TLR1 and TLR6 (via extracellular domain). TLR2 seems to exist in heterodimers with either TLR1 or TLR6 before stimulation by the ligand. The heterodimers form bigger oligomers in response to their corresponding ligands as well as further heterotypic associations with other receptors such as CD14 and/or CD36. Binds MYD88 (via TIR domain). Interacts with TICAM1. Interacts with CNPY3. Interacts with ATG16L1. Interacts with PPP1R11. Interacts with TICAM2. Interacts with TIRAP. In terms of processing, ubiquitinated at Lys-754 by PPP1R11, leading to its degradation. Deubiquitinated by USP2. Post-translationally, glycosylation of Asn-442 is critical for secretion of the N-terminal ectodomain of TLR2.

It is found in the membrane. The protein resides in the cytoplasmic vesicle. Its subcellular location is the phagosome membrane. The protein localises to the membrane raft. Functionally, cooperates with LY96 to mediate the innate immune response to bacterial lipoproteins and other microbial cell wall components. Cooperates with TLR1 or TLR6 to mediate the innate immune response to bacterial lipoproteins or lipopeptides. Acts via MYD88 and TRAF6, leading to NF-kappa-B activation, cytokine secretion and the inflammatory response. May also promote apoptosis in response to lipoproteins. Forms activation clusters composed of several receptors depending on the ligand, these clusters trigger signaling from the cell surface and subsequently are targeted to the Golgi in a lipid-raft dependent pathway. Forms the cluster TLR2:TLR6:CD14:CD36 in response to diacylated lipopeptides and TLR2:TLR1:CD14 in response to triacylated lipopeptides. This Bison bison (American bison) protein is Toll-like receptor 2 (TLR2).